The following is a 1712-amino-acid chain: MERNVLTTFSQEMSQLILNEMPKAEYSSLFNDFVESEFFLIDGDSLLITCICEISFKPGQNLHFFYLVERYLVDLISKGGQFTIVFFKDAEYAYFNFPELLSLRTALILHLQKNTTIDVRTTFSRCLSKEWGSFLEESYPYFLIVADEGLNDLQTQLFNFLIIHSWARKVNVVLSSGQESDVLCLYAYLLPSMYRHQIFSWKNKQNIKDAYTTLLNQLERFKLSALAPLFGSLKWNNITEEAHKTVSLLTQVWPEGSDIRRVFCVTSCSLSLRMYHRFLGNREPSSGQETEIQQVNSNCLTLQEMEDLCKLHCLTVVFLLHLPLSQRACARVITSHWAEDMKPLLQMKKWCEYFILRNIHTFEFWNLNLIHLSDLNDELLLKNIAFYYENENVKGLHLNLGDTIMKDYEYLWNTVSKLVRDFEVGQPFPLRTTKVCFLEKKPSPIKDSSNEMVPNLGFIPTSSFVVDKFAGDILKDLPFLKSDDPIVTSLVKQKEFDELVHWHSHKPLSDDYDRSRCQFDEKSRDPRVLRSVQKYHVFQRFYGNSLETVSSKIIVTQTIKSKKDFSGPKSKKAHETKAEIIARENKKRLFAREEQKEEQKWNALSFSIEEQLKENLHSGIKSLEDFLKSCKSSCVKLQVEMVGLTACLKAWKEHCRSEEGKTTKDLSIAVQVMKRIHSLMEKYSELLQEDDRQLIARCLKYLGFDELASSLHPAQDAENDVKVKKRNKYSVGIGPARFQLQYMGHYLIRDERKDPDPRVQDFIPDTWQRELLDVVDKNESAVIVAPTSSGKTYASYYCMEKVLKESDDGVVVYVAPTKALVNQVAATVQNRFTKNLPSGEVLCGVFTREYRHDALNCQVLITVPACFEILLLAPHRQNWVKKIRYVIFDEVHCLGGEIGAEIWEHLLVMIRCPFLALSATISNPEHLTEWLQSVKWYWKQEDKIIENNTASKRHVGRQAGFPKDYLQVKQSYKVRLVLYGERYNDLEKHVCSIKHGDIHFDHFHPCAALTTDHIERYGFPPDLTLSPRESIQLYDAMFQIWKSWPRAQELCPENFIHFNNKLVIKKMDARKYEESLKAELTSWIKNGNVEQARMVLQNLSPEADLSPENMITMFPLLVEKLRKMEKLPALFFLFKLGAVENAAESVSTFLKKKQETKRPPKADKEAHVMANKLRKVKKSIEKQKIIDEKSQKKTRNVDQSLIHEAEHDNLVKCLEKNLEIPQDCTYADQKAVDTETLQKVFGRVKFERKGEELKALAERGIGYHHSAMSFKEKQLVEILFRKGYLRVVTATGTLALGVNMPCKSVVFAQNSVYLDALNYRQMSGRAGRRGQDLMGDVYFFDIPFPKIGKLIKSNVPELRGHFPLSITLVLRLMLLASKGDDPEDAKAKVLSVLKHSLLSFKQPRVMDMLKLYFLFSLQFLVKEGYLDQEGNPMGFAGLVSHLHYHEPSNLVFVSFLVNGLFHDLCQPTRKGSKHFSQDVMEKLVLVLAHLFGRRYFPPKFQDAHFEFYQSKVFLDDLPEDFSDALDEYNMKIMEDFTTFLRIVSKLADMNQEYQLPLSKIKFTGKECEDSQLVSHLMSCKEGRVAISPFVCLSGNFDDDLLRLETPNHVTLGTIGVNRSQAPVLLSQKFDNRGRKMSLNAYALDFYKHGSLIGLVQDNRMNEGDAYYLLKDFALTIKSISVSLRELCENEDDNVVLAFEQLSTTFWEKLNKV.

A Helicase ATP-binding domain is found at 772–939 (LDVVDKNESA…WLQSVKWYWK (168 aa)). An ATP-binding site is contributed by 785 to 792 (APTSSGKT). The DEVH box signature appears at 889 to 892 (DEVH). In terms of domain architecture, Helicase C-terminal spans 1226 to 1370 (YADQKAVDTE…HFPLSITLVL (145 aa)).

The protein belongs to the helicase family. Interacts with EXOSC1, EXOSC4, RIGI, IFIH1/MDA5 and DHX58/LGP2. Brain, lymph node, prostate, stomach, thyroid, tongue, trachea, uterus, skeletal muscle, spleen, kidney, liver and small intestine.

The protein resides in the cytoplasm. It carries out the reaction ATP + H2O = ADP + phosphate + H(+). Positively regulates RIGI- and IFIH1/MDA5-dependent type I interferon and interferon inducible gene expression in response to viral infection. Binds ssRNA, dsRNA and dsDNA and can promote the binding of RIGI to dsRNA. Exhibits antiviral activity against hepatitis C virus and vesicular stomatitis virus (VSV). The chain is Probable ATP-dependent RNA helicase DDX60 (DDX60) from Homo sapiens (Human).